Reading from the N-terminus, the 1014-residue chain is C2 domain-containing protein 5 (1014 aa).

Residues 1-109 form the C2 domain; the sequence is MPGKLKVKIV…EAATVISGWF (109 aa). Ca(2+) is bound by residues D19, D26, D76, D78, S81, and D84. 4 disordered regions span residues 274–328, 639–669, 801–878, and 992–1014; these read LNPN…GRDG, ETVG…AELD, ALQV…HRGG, and EAGP…DSAT. Polar residues predominate over residues 275 to 292; the sequence is NPNTHSSGPSTPLKNQTY. The segment covering 293-318 has biased composition (low complexity); the sequence is SFSPSKSFSRQSSSSDTDLSLTPKTG. Residues 319–328 show a composition bias toward gly residues; sequence MGSGSAGRDG. Residues 830-840 show a composition bias toward polar residues; that stretch reads SSDSPGPSTFS. Residues 993–1006 show a composition bias toward low complexity; sequence AGPGQPTAPGPQSA.

It depends on Ca(2+) as a cofactor.

It localises to the cytoplasmic vesicle membrane. It is found in the cytoplasm. The protein localises to the cell cortex. The protein resides in the cell membrane. Its subcellular location is the cell projection. It localises to the ruffle. Its function is as follows. May be required for insulin-stimulated glucose transport and glucose transporter SLC2A4/GLUT4 translocation from intracellular glucose storage vesicle (GSV) to the plasma membrane (PM) in adipocytes. May bind phospholipid membranes in a calcium-dependent manner. The protein is C2 domain-containing protein 5 (c2cd5) of Xenopus tropicalis (Western clawed frog).